A 68-amino-acid chain; its full sequence is UPF0435 protein SAOUHSC_02093 (68 aa).

This sequence belongs to the UPF0435 family.

This chain is UPF0435 protein SAOUHSC_02093, found in Staphylococcus aureus (strain NCTC 8325 / PS 47).